We begin with the raw amino-acid sequence, 624 residues long: Chaperone protein HtpG (624 aa).

The tract at residues 1–336 (MKTQKKEVYN…SSDLPLNISR (336 aa)) is a; substrate-binding. Positions 337–552 (EILQDNSITE…STEMTTQMAK (216 aa)) are b. The tract at residues 553-624 (LFSAAGQSVP…ISRMNKLLIK (72 aa)) is c.

This sequence belongs to the heat shock protein 90 family. In terms of assembly, homodimer.

The protein resides in the cytoplasm. Functionally, molecular chaperone. Has ATPase activity. The sequence is that of Chaperone protein HtpG from Buchnera aphidicola subsp. Acyrthosiphon pisum (strain APS) (Acyrthosiphon pisum symbiotic bacterium).